The primary structure comprises 155 residues: Protein FAM162B (155 aa).

The helical transmembrane segment at 95–114 (VKACYIMMGLTIFACLVMIV) threads the bilayer.

This sequence belongs to the UPF0389 family.

The protein localises to the membrane. The sequence is that of Protein FAM162B (fam162b) from Danio rerio (Zebrafish).